The primary structure comprises 207 residues: ATP phosphoribosyltransferase (207 aa).

The protein belongs to the ATP phosphoribosyltransferase family. Short subfamily. As to quaternary structure, heteromultimer composed of HisG and HisZ subunits.

It localises to the cytoplasm. The catalysed reaction is 1-(5-phospho-beta-D-ribosyl)-ATP + diphosphate = 5-phospho-alpha-D-ribose 1-diphosphate + ATP. It functions in the pathway amino-acid biosynthesis; L-histidine biosynthesis; L-histidine from 5-phospho-alpha-D-ribose 1-diphosphate: step 1/9. Functionally, catalyzes the condensation of ATP and 5-phosphoribose 1-diphosphate to form N'-(5'-phosphoribosyl)-ATP (PR-ATP). Has a crucial role in the pathway because the rate of histidine biosynthesis seems to be controlled primarily by regulation of HisG enzymatic activity. The protein is ATP phosphoribosyltransferase of Dictyoglomus thermophilum (strain ATCC 35947 / DSM 3960 / H-6-12).